Here is an 87-residue protein sequence, read N- to C-terminus: Large ribosomal subunit protein bL27 (87 aa).

This sequence belongs to the bacterial ribosomal protein bL27 family.

The sequence is that of Large ribosomal subunit protein bL27 from Pseudarthrobacter chlorophenolicus (strain ATCC 700700 / DSM 12829 / CIP 107037 / JCM 12360 / KCTC 9906 / NCIMB 13794 / A6) (Arthrobacter chlorophenolicus).